The primary structure comprises 342 residues: N-alpha-acetyl-L-2,4-diaminobutyric acid deacetylase (342 aa).

The disordered stretch occupies residues 103–124; it reads TAGRRTSPMDGGNLNRSFPGDP.

It belongs to the DoeB deacetylase family. Requires Zn(2+) as cofactor.

The protein resides in the cytoplasm. It carries out the reaction (2S)-2-acetamido-4-aminobutanoate + H2O = L-2,4-diaminobutanoate + acetate. Functionally, involved in the degradation of ectoine, which allows H.elongata to utilize ectoine as both a carbon and a nitrogen source for growth. Catalyzes the deacetylation of N-alpha-acetyl-L-2,4-diaminobutyrate (N-alpha-Ac-DABA) to yield L-2,4-diaminobutyrate (DABA). In Halomonas elongata (strain ATCC 33173 / DSM 2581 / NBRC 15536 / NCIMB 2198 / 1H9), this protein is N-alpha-acetyl-L-2,4-diaminobutyric acid deacetylase.